Consider the following 318-residue polypeptide: NADH-ubiquinone oxidoreductase chain 1 (318 aa).

Transmembrane regions (helical) follow at residues 2–22, 68–88, 100–120, 146–166, 171–191, 222–242, 253–273, and 293–313; these read FMINLLMMIVPILLAVAFLTL, ISMFIMAPILALTLALTMWTP, LGILFMLAMSSLAVYSILWSG, LAIILLSVLLLSGSFTLPTLI, HIWLIVPSWPLAMMWFISTLA, LFFLAEYANIIMMNIFTTILF, ELYTINFVTKSMLLTISFLWV, and FLPLTLALCMWHVTMPIITAG.

This sequence belongs to the complex I subunit 1 family. Core subunit of respiratory chain NADH dehydrogenase (Complex I) which is composed of 45 different subunits.

Its subcellular location is the mitochondrion inner membrane. The enzyme catalyses a ubiquinone + NADH + 5 H(+)(in) = a ubiquinol + NAD(+) + 4 H(+)(out). In terms of biological role, core subunit of the mitochondrial membrane respiratory chain NADH dehydrogenase (Complex I) which catalyzes electron transfer from NADH through the respiratory chain, using ubiquinone as an electron acceptor. Essential for the catalytic activity and assembly of complex I. This is NADH-ubiquinone oxidoreductase chain 1 (MT-ND1) from Hipposideros armiger terasensis (Formosan leaf-nosed bat).